The sequence spans 382 residues: MTLRDWMRTFGEARSIDINNDLERGYEAALLIQTLELEYYGDRPIRPNLQLSVPRSLQSTILRKFHTAANICRLTFEAIKPNVSQLDSQEYRKYQLIETIVNRYAPKRSSRSTSISRAPDALPRSLLGLVDKVRRQLDPTSEATLVAGFRRRRDSTLISLKIILLLILVPLLVQQISRTYLITPAIDYLAPELPFLSYPKPQLEEQAVEKLRVFKAEIEFDALLKGDSIPSQDELQKALAIKAIQLKDEADKESTHAIKNVLADLAALIAFAFVCIINREELRVLRGFLDEAIYGLSDSAKAFAIILFTDMFVGFHSPEGWQVLLQGIANHFGFPARENFILLFIATFPVILATIFKYWIFRYLNRVSPSSVATLRGMNGSS.

The next 4 helical transmembrane spans lie at 156–176 (TLIS…VQQI), 257–277 (AIKN…VCII), 305–325 (IILF…QVLL), and 340–360 (FILL…KYWI).

It belongs to the CemA family.

Its subcellular location is the cell inner membrane. Required for H(+) efflux immediately after light irradiation to form a rapid H(+) concentration gradient across the thylakoid membranes. Together with PxcL, contributes to transient H(+) uptake following dark to light transition. This Prochlorococcus marinus (strain MIT 9313) protein is Proton extrusion protein PxcA.